The sequence spans 59 residues: ATP synthase protein 8 (59 aa).

Residues 7–23 (LSPPFLYFELIGHFQVE) traverse the membrane as a helical segment.

The protein belongs to the ATPase protein 8 family. F-type ATPases have 2 components, CF(1) - the catalytic core - and CF(0) - the membrane proton channel.

It is found in the mitochondrion membrane. Its function is as follows. Mitochondrial membrane ATP synthase (F(1)F(0) ATP synthase or Complex V) produces ATP from ADP in the presence of a proton gradient across the membrane which is generated by electron transport complexes of the respiratory chain. F-type ATPases consist of two structural domains, F(1) - containing the extramembraneous catalytic core and F(0) - containing the membrane proton channel, linked together by a central stalk and a peripheral stalk. During catalysis, ATP synthesis in the catalytic domain of F(1) is coupled via a rotary mechanism of the central stalk subunits to proton translocation. Part of the complex F(0) domain. Minor subunit located with subunit a in the membrane. The chain is ATP synthase protein 8 (MT-ATP8) from Oenothera berteroana (Bertero's evening primrose).